Here is a 412-residue protein sequence, read N- to C-terminus: Peptidase T (412 aa).

Zn(2+) is bound at residue H81. Residue D83 is part of the active site. D144 lines the Zn(2+) pocket. E178 acts as the Proton acceptor in catalysis. Residues E179, D201, and H383 each coordinate Zn(2+).

This sequence belongs to the peptidase M20B family. It depends on Zn(2+) as a cofactor.

The protein localises to the cytoplasm. The enzyme catalyses Release of the N-terminal residue from a tripeptide.. In terms of biological role, cleaves the N-terminal amino acid of tripeptides. The protein is Peptidase T of Bacillus cereus (strain Q1).